Reading from the N-terminus, the 451-residue chain is Subtilase-type proteinase psp3 (451 aa).

The first 20 residues, 1 to 20 (MRVSWISGLLLVAHLAPSSA), serve as a signal peptide directing secretion. One can recognise an Inhibitor I9 domain in the interval 80–161 (YIVMFKPSVD…LVEPDRVMHV (82 aa)). Residues 169–451 (PWGLARVSHR…PNVLAFNNYE (283 aa)) form the Peptidase S8 domain. Residues aspartate 205, histidine 237, and serine 394 each act as charge relay system in the active site.

The protein belongs to the peptidase S8 family.

The sequence is that of Subtilase-type proteinase psp3 (psp3) from Schizosaccharomyces pombe (strain 972 / ATCC 24843) (Fission yeast).